Here is a 459-residue protein sequence, read N- to C-terminus: MTRRIFGLETEYGITYAHPTDDVTLSADEVARQLFKKVVAWGRSSNVFLRNGSRLYLDVGSHPEYATAECDSVEQLIAHDRGGELILVDLIDDAQRRLAQEGYTGTIHLLKNNTDSAGNSYGCHENYLVRRQGDFTRLADILIPFLITRQVVVGAGKIMSTPQGPRYCFSQRADHMWEAVSSATTRSRPIINTRDEPHADAEFYRRLHVIVGDSNIAEPTTFLKVGATDMVLRLIEAGVPMRDLALDNAMRAIREISHDITGRATVTLSSGKTVTAWQLQEMYVEKVRTYVESLGPLSPTDEAVFELWERALRAVETQDHSLIDRDIDWAIKKRLLDRTQDRLGCALDDPRLARLDLAYHDISPATGLGHRLVSRSMMNRVVSDAEVERASQVAPETTRAHLRGRFVTAAQEQKKDYTVDWVHLKLNDQAQRTVLCKDPFAHVDDRVDQLIDSMRTQAT.

Position 9 (Glu-9) interacts with Mg(2+). Residue Arg-54 participates in ATP binding. Residue Tyr-56 participates in Mg(2+) binding. Asp-58 functions as the Proton acceptor in the catalytic mechanism. Residue Glu-64 coordinates Mg(2+). Residues Thr-67 and Trp-421 each contribute to the ATP site.

Belongs to the Pup ligase/Pup deamidase family. Pup-conjugating enzyme subfamily.

The catalysed reaction is ATP + [prokaryotic ubiquitin-like protein]-L-glutamate + [protein]-L-lysine = ADP + phosphate + N(6)-([prokaryotic ubiquitin-like protein]-gamma-L-glutamyl)-[protein]-L-lysine.. It participates in protein degradation; proteasomal Pup-dependent pathway. Its pathway is protein modification; protein pupylation. Its function is as follows. Catalyzes the covalent attachment of the prokaryotic ubiquitin-like protein modifier Pup to the proteasomal substrate proteins, thereby targeting them for proteasomal degradation. This tagging system is termed pupylation. The ligation reaction involves the side-chain carboxylate of the C-terminal glutamate of Pup and the side-chain amino group of a substrate lysine. The polypeptide is Pup--protein ligase (Jonesia denitrificans (strain ATCC 14870 / DSM 20603 / BCRC 15368 / CIP 55.134 / JCM 11481 / NBRC 15587 / NCTC 10816 / Prevot 55134) (Listeria denitrificans)).